The sequence spans 463 residues: Calcitonin gene-related peptide type 1 receptor (463 aa).

Positions Met1–Ala22 are cleaved as a signal peptide. The Extracellular portion of the chain corresponds to Glu23–Leu138. Asn29, Asn65, Asn117, Asn122, Asn127, and Asn128 each carry an N-linked (GlcNAc...) asparagine glycan. 3 cysteine pairs are disulfide-bonded: Cys47/Cys73, Cys64/Cys104, and Cys87/Cys126. Residues Asn139–Phe163 form a helical membrane-spanning segment. Residues Tyr164 to Thr174 are Cytoplasmic-facing. Residues Leu175–Val197 traverse the membrane as a helical segment. At Ala198–Pro208 the chain is on the extracellular side. A helical transmembrane segment spans residues Val209–His237. Topologically, residues Thr238–Leu251 are cytoplasmic. The helical transmembrane segment at Met252–Ala272 threads the bilayer. Over Arg273–His288 the chain is Extracellular. Residues Thr287–His288 are required for RAMP3 interaction. A helical transmembrane segment spans residues Leu289–Arg313. The Cytoplasmic segment spans residues Val314–Asn328. A helical membrane pass occupies residues Leu329 to Leu350. At Phe351–Asp365 the chain is on the extracellular side. The chain crosses the membrane as a helical span at residues Tyr366–Phe386. The Cytoplasmic portion of the chain corresponds to Asn387–Met463. A phosphoserine mark is found at Ser419 and Ser444.

The protein belongs to the G-protein coupled receptor 2 family. In terms of assembly, heterodimer of CALCRL and RAMP1; the receptor complex functions as CGRP receptor. Heterodimer of CALCRL and RAMP2 or CALCRL and RAMP3; the complexes function as adrenomedullin receptor. As to expression, expressed predominantly in the lung, thymus, heart and brain.

It localises to the cell membrane. G protein-coupled receptor which specificity is determined by its interaction with receptor-activity-modifying proteins (RAMPs). Together with RAMP1, form the receptor complex for calcitonin-gene-related peptides CALCA/CGRP1 and CALCB/CGRP2. Together with RAMP2 or RAMP3, function as receptor complexes for adrenomedullin (ADM and ADM2). Ligand binding causes a conformation change that triggers signaling via guanine nucleotide-binding proteins (G proteins) and modulates the activity of downstream effectors. Activates cAMP-dependent pathway. In Mus musculus (Mouse), this protein is Calcitonin gene-related peptide type 1 receptor.